We begin with the raw amino-acid sequence, 559 residues long: PHD finger protein 1 (559 aa).

The Tudor domain occupies 29–86; the sequence is PRLWEGQDVLARWTDGLLYLGTIKKVDSAREVCLVQFEDDSQFLVLWKDISPAALPGE. 2 PHD-type zinc fingers span residues 87–142 and 186–240; these read ELLC…CVFA and QSYC…CRGG. Disordered stretches follow at residues 338-434 and 448-526; these read PVEL…TDAR and HPSA…GGVS. A compositionally biased stretch (basic and acidic residues) spans 369 to 386; sequence WRSEPEPLRRRQKGKVEE. 2 stretches are compositionally biased toward polar residues: residues 417–426 and 449–459; these read NQSYEGSSGY and PSASTAGTSGD. The segment covering 481–515 has biased composition (low complexity); sequence SSPHSVTASSSSVPALTPGFSRHSPPSPLCRSLSP.

It belongs to the Polycomblike family. As to quaternary structure, associated component of the PRC2 complex. Interacts with p53/TP53. Interacts with CHMP1. As to expression, testis-specific.

The protein resides in the nucleus. The protein localises to the cytoplasm. It localises to the cytoskeleton. Its subcellular location is the microtubule organizing center. It is found in the centrosome. Its function is as follows. Polycomb group (PcG) that specifically binds histone H3 trimethylated at 'Lys-36' (H3K36me3) and recruits the PRC2 complex. Involved in DNA damage response and is recruited at double-strand breaks (DSBs). Acts by binding to H3K36me3, a mark for transcriptional activation, and recruiting the PRC2 complex: it is however unclear whether recruitment of the PRC2 complex to H3K36me3 leads to enhance or inhibit H3K27me3 methylation mediated by the PRC2 complex. According to some reports, PRC2 recruitment by PHF1 promotes H3K27me3 and subsequent gene silencing by inducing spreading of PRC2 and H3K27me3 into H3K36me3 loci. According to other reports, PHF1 recruits the PRC2 complex at double-strand breaks (DSBs) and inhibits the activity of PRC2. Regulates p53/TP53 stability and prolonges its turnover: may act by specifically binding to a methylated from of p53/TP53. In Mus musculus (Mouse), this protein is PHD finger protein 1 (Phf1).